The primary structure comprises 150 residues: MRVVIQRVSQASVVVENKLISSIKTGYMLLVGISTEDTIADIEKSVRKVSGLRLFPDDSNAQWKRSIKDIGGEVLSISQFTLIARTKKGTRPDFHEAQKGHLALEMYDRFLDLLRQELGEKQVQDGEFGAMMSCSLTNEGPVTIIYDTKE.

The Gly-cisPro motif, important for rejection of L-amino acids signature appears at 140–141 (GP).

The protein belongs to the DTD family. Homodimer.

The protein localises to the cytoplasm. It catalyses the reaction glycyl-tRNA(Ala) + H2O = tRNA(Ala) + glycine + H(+). The catalysed reaction is a D-aminoacyl-tRNA + H2O = a tRNA + a D-alpha-amino acid + H(+). In terms of biological role, an aminoacyl-tRNA editing enzyme that deacylates mischarged D-aminoacyl-tRNAs. Also deacylates mischarged glycyl-tRNA(Ala), protecting cells against glycine mischarging by AlaRS. Acts via tRNA-based rather than protein-based catalysis; rejects L-amino acids rather than detecting D-amino acids in the active site. By recycling D-aminoacyl-tRNA to D-amino acids and free tRNA molecules, this enzyme counteracts the toxicity associated with the formation of D-aminoacyl-tRNA entities in vivo and helps enforce protein L-homochirality. The chain is D-aminoacyl-tRNA deacylase (DTD1) from Eremothecium gossypii (strain ATCC 10895 / CBS 109.51 / FGSC 9923 / NRRL Y-1056) (Yeast).